A 477-amino-acid chain; its full sequence is Acylamidase (477 aa).

Active-site charge relay system residues include Lys-82 and Ser-157. Ser-181 functions as the Acyl-ester intermediate in the catalytic mechanism.

It belongs to the amidase family.

The enzyme catalyses a monocarboxylic acid amide + H2O = a monocarboxylate + NH4(+). It catalyses the reaction an anilide + H2O = aniline + a carboxylate + H(+). It carries out the reaction an N-acyl-L-amino acid + H2O = an L-alpha-amino acid + a carboxylate. The catalysed reaction is an N-acetyl-L-cysteine-S-conjugate + H2O = an S-substituted L-cysteine + acetate. Its activity is regulated as follows. Amidase activity is completely suppressed by inhibitors of serine proteases (phenylmethylsulfonyl fluoride and diisopropyl fluorophosphate), partially inhibited by copper and mercury ions, but is not affected by inhibitors of aliphatic amidases (acetaldehyde and nitrophenyl disulfides) or by EDTA. Amidase with broad substrate specificity, catalyzing the hydrolysis of a wide range of N-substituted amides, and, to a lesser extent, the hydrolysis of non-substituted amides. Acid para-nitroanilides (4'-nitroacetanilide, Gly-pNA, Ala-pNA, Leu-pNA) are the best substrates for this enzyme. N-substituted acrylamides (isopropyl acrylamide, N,N-dimethyl-aminopropyl acrylamide, and methylene-bis-acrylamide), N-acetyl derivatives of glycine, alanine and leucine, and aliphatic amides (acetamide, acrylamide, isobutyramide, n-butyramide, and valeramide) can also be used as substrates but with less efficiency. This Rhodococcus erythropolis (Arthrobacter picolinophilus) protein is Acylamidase.